Reading from the N-terminus, the 172-residue chain is Adenine phosphoribosyltransferase (172 aa).

Belongs to the purine/pyrimidine phosphoribosyltransferase family. As to quaternary structure, homodimer.

It is found in the cytoplasm. The catalysed reaction is AMP + diphosphate = 5-phospho-alpha-D-ribose 1-diphosphate + adenine. It functions in the pathway purine metabolism; AMP biosynthesis via salvage pathway; AMP from adenine: step 1/1. In terms of biological role, catalyzes a salvage reaction resulting in the formation of AMP, that is energically less costly than de novo synthesis. The polypeptide is Adenine phosphoribosyltransferase (Desulforamulus reducens (strain ATCC BAA-1160 / DSM 100696 / MI-1) (Desulfotomaculum reducens)).